We begin with the raw amino-acid sequence, 23 residues long: M-myrmeciitoxin-Mp2b (23 aa).

A Glutamine amide modification is found at glutamine 23.

This sequence belongs to the formicidae venom precursor-01 superfamily. Ant pilosulin family. Heterodimer with M-MIITX-Mp2a (pilosulin-3a) (AC Q26464); disulfide-linked. Only heterodimers (and not monomers) have been identified in the venom. In terms of tissue distribution, expressed by the venom gland.

Its subcellular location is the secreted. In terms of biological role, heterodimer protein that may serve both defensive (pain-inducing) and predatory (insecticidal) roles. Has membrane-disrupting activity and shows induction of non-specific calcium influx into cells,. Shows broad-spectrum activity against a diverse range of bacteria, and cell lines, as well as hemolytic activity (EC(50)=2.18 uM). In vivo, shows moderate insecticidal activity against D.melanogaster and potent anthelmintic activity against the veterinary nematode H.contortus. In addition, intraplantar injection into mice induces nocifensive behavior and mechanical allodynia. This chain is M-myrmeciitoxin-Mp2b, found in Myrmecia pilosula (Jack jumper ant).